The following is a 198-amino-acid chain: Pyridoxal 5'-phosphate synthase subunit PdxT (198 aa).

L-glutamine is bound at residue 49-51; it reads GES. C81 serves as the catalytic Nucleophile. L-glutamine contacts are provided by residues R113 and 141-142; that span reads IR. Catalysis depends on charge relay system residues H177 and E179.

The protein belongs to the glutaminase PdxT/SNO family. In terms of assembly, in the presence of PdxS, forms a dodecamer of heterodimers. Only shows activity in the heterodimer.

It carries out the reaction aldehydo-D-ribose 5-phosphate + D-glyceraldehyde 3-phosphate + L-glutamine = pyridoxal 5'-phosphate + L-glutamate + phosphate + 3 H2O + H(+). The catalysed reaction is L-glutamine + H2O = L-glutamate + NH4(+). The protein operates within cofactor biosynthesis; pyridoxal 5'-phosphate biosynthesis. Catalyzes the hydrolysis of glutamine to glutamate and ammonia as part of the biosynthesis of pyridoxal 5'-phosphate. The resulting ammonia molecule is channeled to the active site of PdxS. This chain is Pyridoxal 5'-phosphate synthase subunit PdxT, found in Mycobacterium tuberculosis (strain ATCC 25177 / H37Ra).